The following is a 206-amino-acid chain: Small ribosomal subunit protein uS4 (206 aa).

In terms of domain architecture, S4 RNA-binding spans 96 to 159 (SRLDNVVYRM…KKQARIVEGL (64 aa)).

Belongs to the universal ribosomal protein uS4 family. Part of the 30S ribosomal subunit. Contacts protein S5. The interaction surface between S4 and S5 is involved in control of translational fidelity.

One of the primary rRNA binding proteins, it binds directly to 16S rRNA where it nucleates assembly of the body of the 30S subunit. Its function is as follows. With S5 and S12 plays an important role in translational accuracy. This Chromobacterium violaceum (strain ATCC 12472 / DSM 30191 / JCM 1249 / CCUG 213 / NBRC 12614 / NCIMB 9131 / NCTC 9757 / MK) protein is Small ribosomal subunit protein uS4.